A 501-amino-acid polypeptide reads, in one-letter code: Endoglucanase 1 (501 aa).

An N-terminal signal peptide occupies residues 1–29; the sequence is MALYLSSSRLITFLSFILLLSNGFSSSSS. D96 serves as the catalytic Nucleophile. Catalysis depends on residues H422, D473, and E482.

It belongs to the glycosyl hydrolase 9 (cellulase E) family.

The protein resides in the secreted. It catalyses the reaction Endohydrolysis of (1-&gt;4)-beta-D-glucosidic linkages in cellulose, lichenin and cereal beta-D-glucans.. The polypeptide is Endoglucanase 1 (CEL2) (Arabidopsis thaliana (Mouse-ear cress)).